The sequence spans 378 residues: uncharacterized protein (378 aa).

C38, H60, C90, C93, C96, and C104 together coordinate Zn(2+).

It belongs to the zinc-containing alcohol dehydrogenase family. Class-III subfamily. Zn(2+) serves as cofactor.

This is an uncharacterized protein from Bacillus subtilis (strain 168).